Here is a 265-residue protein sequence, read N- to C-terminus: Indole-3-glycerol phosphate synthase (265 aa).

This sequence belongs to the TrpC family.

The enzyme catalyses 1-(2-carboxyphenylamino)-1-deoxy-D-ribulose 5-phosphate + H(+) = (1S,2R)-1-C-(indol-3-yl)glycerol 3-phosphate + CO2 + H2O. It participates in amino-acid biosynthesis; L-tryptophan biosynthesis; L-tryptophan from chorismate: step 4/5. This is Indole-3-glycerol phosphate synthase from Hyphomonas neptunium (strain ATCC 15444).